We begin with the raw amino-acid sequence, 501 residues long: Sucrose transport protein SUT2 (501 aa).

Residues 1–31 are Cytoplasmic-facing; the sequence is MPRRPSGGGGGAGPAAAAVRKVPLRKLLRAA. A helical transmembrane segment spans residues 32–52; it reads SVACGVQFGWALQLSLLTPYV. Topologically, residues 53 to 55 are extracellular; that stretch reads QEL. The helical transmembrane segment at 56–76 threads the bilayer; it reads GIPHAFASLVWLCGPLSGLLV. Residues 77 to 98 are Cytoplasmic-facing; the sequence is QPLVGHLSDRIAPAASPLGRRR. A helical membrane pass occupies residues 99–119; the sequence is PFIAAGAASIAAAVLTVGFSA. At 120–135 the chain is on the extracellular side; that stretch reads DLGRIFGDSITPGSTR. The chain crosses the membrane as a helical span at residues 136–156; that stretch reads LGAIIVYLVGFWLLDVGNNAT. The Cytoplasmic portion of the chain corresponds to 157-176; the sequence is QGPCRAFLADLTENDPRRTR. The helical transmembrane segment at 177-197 threads the bilayer; sequence IANAYFSLFMALGNILGYATG. Topologically, residues 198–222 are extracellular; that stretch reads AYSGWYKIFPFTVTPSCSISCANLK. The chain crosses the membrane as a helical span at residues 223–243; it reads SAFLLDIIILVVTTCITVASV. The Cytoplasmic portion of the chain corresponds to 244-278; sequence QEPQSFGSDEADHPSTEQEAFLWELFGSFRYFTLP. A helical membrane pass occupies residues 279-299; that stretch reads VWMVLIVTALTWIGWFPFILF. The Extracellular segment spans residues 300-327; the sequence is DTDWMGREIYRGSPDDPSITQSYHDGVR. A helical membrane pass occupies residues 328–348; the sequence is MGSFGLMLNSVLLGFTSIVLE. The Cytoplasmic segment spans residues 349 to 356; it reads KLCRKWGA. The chain crosses the membrane as a helical span at residues 357 to 377; that stretch reads GLVWGVSNILMALCFVAMLVI. Residues 378–394 lie on the Extracellular side of the membrane; sequence TYVAKNMDYPPSGVPPT. A helical transmembrane segment spans residues 395 to 415; the sequence is GIVIASLVVFTILGAPLAITY. The Cytoplasmic segment spans residues 416–433; that stretch reads SIPYAMAASRVENLGLGQ. A helical membrane pass occupies residues 434–454; it reads GLAMGILNLAIVIPQVIVSLG. Over 455-467 the chain is Extracellular; the sequence is SGPWDQLFGGGNA. Residues 468–488 traverse the membrane as a helical segment; it reads PAFAVAAAASFIGGLVAILGL. Residues 489–501 lie on the Cytoplasmic side of the membrane; it reads PRARIASRRRGHR.

Belongs to the glycoside-pentoside-hexuronide (GPH) cation symporter transporter (TC 2.A.2.4) family. In terms of assembly, homodimer. Widely expressed.

Its subcellular location is the cell membrane. It participates in glycan biosynthesis; sucrose metabolism. Functionally, responsible for the transport of sucrose into the cell, with the concomitant uptake of protons (symport system). May also transport other glucosides. The sequence is that of Sucrose transport protein SUT2 (SUT2) from Oryza sativa subsp. japonica (Rice).